A 252-amino-acid chain; its full sequence is Ribosomal RNA large subunit methyltransferase E (252 aa).

S-adenosyl-L-methionine is bound by residues Gly-48, Trp-50, Asp-68, Asp-84, and Asp-107. Lys-147 functions as the Proton acceptor in the catalytic mechanism. Positions 194 to 252 (PVREGDTLEVEIDNLGDEGDGVAKVDGYTLFVSGAEPGDAPEVRVTDVKPRFGFAETLE) constitute a TRAM domain.

It belongs to the class I-like SAM-binding methyltransferase superfamily. RNA methyltransferase RlmE family.

It is found in the cytoplasm. The enzyme catalyses uridine(2552) in 23S rRNA + S-adenosyl-L-methionine = 2'-O-methyluridine(2552) in 23S rRNA + S-adenosyl-L-homocysteine + H(+). In terms of biological role, specifically methylates the uridine in position 2552 of 23S rRNA at the 2'-O position of the ribose in the fully assembled 50S ribosomal subunit. The sequence is that of Ribosomal RNA large subunit methyltransferase E from Natronomonas pharaonis (strain ATCC 35678 / DSM 2160 / CIP 103997 / JCM 8858 / NBRC 14720 / NCIMB 2260 / Gabara) (Halobacterium pharaonis).